The primary structure comprises 165 residues: ATP synthase subunit b (165 aa).

The helical transmembrane segment at 7–27 threads the bilayer; sequence GTSLGNLLIVTGSFILLLLLV.

The protein belongs to the ATPase B chain family. As to quaternary structure, F-type ATPases have 2 components, F(1) - the catalytic core - and F(0) - the membrane proton channel. F(1) has five subunits: alpha(3), beta(3), gamma(1), delta(1), epsilon(1). F(0) has three main subunits: a(1), b(2) and c(10-14). The alpha and beta chains form an alternating ring which encloses part of the gamma chain. F(1) is attached to F(0) by a central stalk formed by the gamma and epsilon chains, while a peripheral stalk is formed by the delta and b chains.

It is found in the cell membrane. In terms of biological role, f(1)F(0) ATP synthase produces ATP from ADP in the presence of a proton or sodium gradient. F-type ATPases consist of two structural domains, F(1) containing the extramembraneous catalytic core and F(0) containing the membrane proton channel, linked together by a central stalk and a peripheral stalk. During catalysis, ATP synthesis in the catalytic domain of F(1) is coupled via a rotary mechanism of the central stalk subunits to proton translocation. Component of the F(0) channel, it forms part of the peripheral stalk, linking F(1) to F(0). In Streptococcus mutans serotype c (strain ATCC 700610 / UA159), this protein is ATP synthase subunit b.